The sequence spans 2225 residues: Multifunctional protein CAD (2225 aa).

Residue Ala2 is modified to N-acetylalanine. The segment at 2 to 365 is GATase (Glutamine amidotransferase); the sequence is AALVLEDGSV…TVKEATAGNP (364 aa). Residues Ser44, Gly222, and Gly224 each contribute to the L-glutamine site. A Glutamine amidotransferase type-1 domain is found at 177-363; that stretch reads RILALDCGLK…LETVKEATAG (187 aa). Residue Cys252 is the Nucleophile; for GATase activity of the active site. The L-glutamine site is built by Leu253, Gln256, Asn294, Gly296, and Phe297. Residues His336 and Glu338 each act as for GATase activity in the active site. Residues 366–394 are linker; the sequence is GGQTVRERLTERLCPPGIPTPGSGLPPPR. The tract at residues 395–933 is CPSase A; sequence KVLILGSGGL…TTHDLTFRTP (539 aa). The segment at 395-1455 is CPSase (Carbamoyl phosphate synthase); it reads KVLILGSGGL…APPLKVHVDC (1061 aa). A Phosphothreonine; by MAPK1 modification is found at Thr456. ATP is bound by residues Arg515, Arg555, Gly561, Gly562, Lys592, Glu599, Gly625, Ile626, His627, Gln668, and Glu682. One can recognise an ATP-grasp 1 domain in the interval 519 to 711; sequence AARMAEIGEH…LAYVAAKLAL (193 aa). Residues Gln668, Glu682, and Asn684 each contribute to the Mg(2+) site. Positions 668, 682, and 684 each coordinate Mn(2+). Lys747 is subject to N6-acetyllysine. The interval 934-1455 is CPSase B; that stretch reads HVLVLGSGVY…APPLKVHVDC (522 aa). Ser1038 is modified (phosphoserine). Residues 1052–1243 enclose the ATP-grasp 2 domain; sequence SRLLDTIGIS…LVALATRVIM (192 aa). The ATP site is built by Arg1088, Lys1127, Ile1129, Glu1134, Gly1159, Val1160, His1161, Ser1162, Gln1202, and Glu1214. Mg(2+) is bound by residues Gln1202, Glu1214, and Asn1216. Mn(2+)-binding residues include Gln1202, Glu1214, and Asn1216. The region spanning 1308–1462 is the MGS-like domain; the sequence is FKIPKKNILL…VDCMTSQKLV (155 aa). At Ser1406 the chain carries Phosphoserine; by PKA. N6-acetyllysine is present on Lys1411. Residues 1456-1788 form a DHOase (dihydroorotase) region; sequence MTSQKLVRLP…VKGTVRRVVL (333 aa). Residues His1471 and His1473 each contribute to the Zn(2+) site. 2 residues coordinate (S)-dihydroorotate: Arg1475 and Asn1505. Zn(2+)-binding residues include Lys1556, His1590, Cys1613, His1614, and Glu1637. Lys1556 carries the N6-carboxylysine modification. Arg1661 serves as a coordination point for (S)-dihydroorotate. Asp1686 lines the Zn(2+) pocket. Asp1686 acts as the For DHOase activity in catalysis. Residues His1690 and Pro1702 each contribute to the (S)-dihydroorotate site. The segment at 1789–1917 is linker; it reads RGEVAYIDGQ…GLLHPQTSPL (129 aa). The tract at residues 1811–1899 is disordered; sequence KWPQGAVPQL…YPPPPVPRQA (89 aa). Positions 1825–1834 are enriched in polar residues; the sequence is PATSEMTTTP. Phosphoserine; by RPS6KB1 and PKA is present on Ser1859. Over residues 1866-1878 the composition is skewed to basic and acidic residues; that stretch reads EEPKEKSSRKVAE. Ser1873 carries the phosphoserine; by PKC; in vitro modification. Thr1884 bears the Phosphothreonine mark. Residues Ser1900 and Ser1938 each carry the phosphoserine modification. Residues 1918 to 2225 are ATCase (Aspartate transcarbamylase); it reads LHSLVGQHIL…ALLATVLGRF (308 aa). The carbamoyl phosphate site is built by Arg1975 and Thr1976. Lys2003 contributes to the L-aspartate binding site. Carbamoyl phosphate contacts are provided by Arg2024, His2052, and Gln2055. L-aspartate-binding residues include Arg2085 and Arg2146. 2 residues coordinate carbamoyl phosphate: Met2185 and Pro2186.

It in the N-terminal section; belongs to the CarA family. This sequence in the 2nd section; belongs to the CarB family. In the 3rd section; belongs to the metallo-dependent hydrolases superfamily. DHOase family. CAD subfamily. The protein in the C-terminal section; belongs to the aspartate/ornithine carbamoyltransferase superfamily. ATCase family. As to quaternary structure, homohexamer. Interacts with CIPC. The cofactor is Zn(2+). Mg(2+) serves as cofactor. Mn(2+) is required as a cofactor. Activated by MAP kinase (Erk1/2) phosphorylation just prior to the S phase of the cell cycle, when the demand for pyrimidine nucleotides is greatest, and down-regulated as the cells emerge from S phase by protein kinase A (PKA) phosphorylation. Phosphorylation at Ser-1859 by RPS6KB1 downstream of MTOR promotes oligomerization and stimulates dihydroorotase activity. Phosphorylation at Ser-1406 reduces sensitivity to feedback inhibition by UTP.

It localises to the cytoplasm. The protein localises to the nucleus. The enzyme catalyses hydrogencarbonate + L-glutamine + 2 ATP + H2O = carbamoyl phosphate + L-glutamate + 2 ADP + phosphate + 2 H(+). The catalysed reaction is L-glutamine + H2O = L-glutamate + NH4(+). It carries out the reaction hydrogencarbonate + NH4(+) + 2 ATP = carbamoyl phosphate + 2 ADP + phosphate + 2 H(+). It catalyses the reaction carbamoyl phosphate + L-aspartate = N-carbamoyl-L-aspartate + phosphate + H(+). The enzyme catalyses (S)-dihydroorotate + H2O = N-carbamoyl-L-aspartate + H(+). It participates in pyrimidine metabolism; UMP biosynthesis via de novo pathway; (S)-dihydroorotate from bicarbonate: step 1/3. The protein operates within pyrimidine metabolism; UMP biosynthesis via de novo pathway; (S)-dihydroorotate from bicarbonate: step 2/3. Its pathway is pyrimidine metabolism; UMP biosynthesis via de novo pathway; (S)-dihydroorotate from bicarbonate: step 3/3. Its activity is regulated as follows. Allosterically regulated and controlled by phosphorylation. 5-phosphoribose 1-diphosphate (PRPP) is an activator while UMP and UTP are inhibitors of the CPSase reaction. In terms of biological role, multifunctional protein that encodes the first 3 enzymatic activities of the de novo pyrimidine pathway: carbamoylphosphate synthetase (CPSase; EC 6.3.5.5), aspartate transcarbamylase (ATCase; EC 2.1.3.2) and dihydroorotase (DHOase; EC 3.5.2.3). The CPSase-function is accomplished in 2 steps, by a glutamine-dependent amidotransferase activity (GATase) that binds and cleaves glutamine to produce ammonia, followed by an ammonium-dependent carbamoyl phosphate synthetase, which reacts with the ammonia, hydrogencarbonate and ATP to form carbamoyl phosphate. The endogenously produced carbamoyl phosphate is sequestered and channeled to the ATCase active site. ATCase then catalyzes the formation of carbamoyl-L-aspartate from L-aspartate and carbamoyl phosphate. In the last step, DHOase catalyzes the cyclization of carbamoyl aspartate to dihydroorotate. The chain is Multifunctional protein CAD from Homo sapiens (Human).